The chain runs to 242 residues: MAAPALRAPLRWSGLALGVRCAVWNLPGLTQVRGSRYAPEFREPLIDKEYYRKPVAELTEEEKYDQELKKTQFIKAAAATETSSVFADPVISKFTNMMMKGGNKVLARSLMAQTLEAVKRKQFEKYRAASAEEQATIERNPYRIFHEALKNCEPVIGLVPILKGGHFYQVPVPLADRRRRFLAMKWMITECRENKPRRTLMPEKLSHELLEAFHNRGPVIKRKHNMHKMAEANRALAHYRWW.

A mitochondrion-targeting transit peptide spans 1–37 (MAAPALRAPLRWSGLALGVRCAVWNLPGLTQVRGSRY). An N6-acetyllysine modification is found at Lys228.

Belongs to the universal ribosomal protein uS7 family. As to quaternary structure, component of the mitochondrial ribosome small subunit (28S) which comprises a 12S rRNA and about 30 distinct proteins.

It localises to the mitochondrion. This chain is Small ribosomal subunit protein uS7m (Mrps7), found in Mus musculus (Mouse).